The sequence spans 622 residues: Polygalacturonase 1 beta-like protein 1 (622 aa).

The signal sequence occupies residues 1-21 (MRKQFVFLLPFLSRLYHVVIA). The FXXY 1 repeat unit spans residues 118–121 (FSVY). The N-linked (GlcNAc...) asparagine glycan is linked to Asn-125. FXXY repeat units follow at residues 126–129 (FTNY), 140–143 (FKKY), 154–157 (FRRY), 168–171 (FTGY), 182–185 (FNSY), 196–199 (FKNY), 210–213 (FKAY), 224–227 (FKTY), 239–242 (FTSY), 253–256 (FSSY), and 267–270 (FSNY). Asn-278 carries N-linked (GlcNAc...) asparagine glycosylation. FXXY repeat units follow at residues 281–284 (FKGY), 295–298 (FKSY), 309–312 (FLNY), 323–326 (FSSY), 337–340 (FVNY), 351–354 (FSGY), and 365–368 (FKTY). N-linked (GlcNAc...) asparagine glycosylation is present at Asn-371. FXXY repeat units lie at residues 374-377 (FKDY) and 384-387 (FAKY). 2 N-linked (GlcNAc...) asparagine glycosylation sites follow: Asn-388 and Asn-461. A BURP domain is found at 407 to 621 (FFRESMLKEG…FENDMNWAIA (215 aa)).

In terms of tissue distribution, expressed in flowers and stems.

Its subcellular location is the secreted. The protein localises to the extracellular space. It is found in the apoplast. The protein resides in the cell wall. Functionally, involved in cell size determination. The protein is Polygalacturonase 1 beta-like protein 1 of Arabidopsis thaliana (Mouse-ear cress).